A 142-amino-acid chain; its full sequence is Hemoglobin subunit alpha (142 aa).

Positions 2 to 142 (VLSAADKGHV…VSTVLTSKYR (141 aa)) constitute a Globin domain. S4 carries the phosphoserine modification. An N6-succinyllysine mark is found at K8 and K12. K17 bears the N6-acetyllysine; alternate mark. The residue at position 17 (K17) is an N6-succinyllysine; alternate. Y25 is subject to Phosphotyrosine. A Phosphoserine modification is found at S36. K41 bears the N6-succinyllysine mark. A Phosphoserine modification is found at S50. Residue H59 coordinates O2. Position 88 (H88) interacts with heme b. Position 103 is a phosphoserine (S103). Residue T109 is modified to Phosphothreonine. Phosphoserine is present on S125. Phosphothreonine is present on residues T135 and T138. S139 is modified (phosphoserine).

It belongs to the globin family. As to quaternary structure, heterotetramer of two alpha chains and two beta chains. In terms of tissue distribution, red blood cells.

Its function is as follows. Involved in oxygen transport from the lung to the various peripheral tissues. Functionally, hemopressin acts as an antagonist peptide of the cannabinoid receptor CNR1. Hemopressin-binding efficiently blocks cannabinoid receptor CNR1 and subsequent signaling. This chain is Hemoglobin subunit alpha (HBA), found in Notamacropus eugenii (Tammar wallaby).